The sequence spans 350 residues: Inhibitor of nuclear factor kappa-B kinase-interacting protein (350 aa).

Residues 1-11 (MSEVKSRKKSG) are compositionally biased toward basic residues. The interval 1–39 (MSEVKSRKKSGPKGAPAAEPGKRSEGGKTPVARSSGGGG) is disordered. A helical transmembrane segment spans residues 46–62 (CLSLLSLGTCLGLAWFV). Asn-144 carries N-linked (GlcNAc...) asparagine glycosylation. A coiled-coil region spans residues 184–217 (GLVTDVISLTDSVQELENKIEKVEKNTVKNIGDL). Asn-328 carries N-linked (GlcNAc...) asparagine glycosylation.

Post-translationally, N-glycosylated. Isoform 4 is glycosylated at Asn-154. In terms of tissue distribution, expressed in vein endothelial cells. Isoform 4 is expressed in lung, kidney, spleen, thymus and skeletal muscle.

It localises to the endoplasmic reticulum membrane. In terms of biological role, target of p53/TP53 with pro-apoptotic function. The protein is Inhibitor of nuclear factor kappa-B kinase-interacting protein (IKBIP) of Homo sapiens (Human).